Here is an 834-residue protein sequence, read N- to C-terminus: Glycerol-3-phosphate acyltransferase (834 aa).

An HXXXXD motif motif is present at residues 309–314 (CHRSHI).

The protein belongs to the GPAT/DAPAT family.

It is found in the cell inner membrane. It carries out the reaction sn-glycerol 3-phosphate + an acyl-CoA = a 1-acyl-sn-glycero-3-phosphate + CoA. It participates in phospholipid metabolism; CDP-diacylglycerol biosynthesis; CDP-diacylglycerol from sn-glycerol 3-phosphate: step 1/3. The polypeptide is Glycerol-3-phosphate acyltransferase (Pseudomonas aeruginosa (strain LESB58)).